Here is a 466-residue protein sequence, read N- to C-terminus: UDP-N-acetylmuramoylalanine--D-glutamate ligase (466 aa).

121–127 (GTNGKST) lines the ATP pocket.

It belongs to the MurCDEF family.

It is found in the cytoplasm. It carries out the reaction UDP-N-acetyl-alpha-D-muramoyl-L-alanine + D-glutamate + ATP = UDP-N-acetyl-alpha-D-muramoyl-L-alanyl-D-glutamate + ADP + phosphate + H(+). It functions in the pathway cell wall biogenesis; peptidoglycan biosynthesis. In terms of biological role, cell wall formation. Catalyzes the addition of glutamate to the nucleotide precursor UDP-N-acetylmuramoyl-L-alanine (UMA). In Nitrobacter hamburgensis (strain DSM 10229 / NCIMB 13809 / X14), this protein is UDP-N-acetylmuramoylalanine--D-glutamate ligase.